The sequence spans 247 residues: GTP cyclohydrolase 1 type 2 homolog (247 aa).

The a divalent metal cation site is built by H63, H64, D101, H215, and E219.

It belongs to the GTP cyclohydrolase I type 2/NIF3 family. As to quaternary structure, homohexamer.

This is GTP cyclohydrolase 1 type 2 homolog from Yersinia pestis.